Here is a 418-residue protein sequence, read N- to C-terminus: Zinc metalloproteinase-disintegrin-like batroxstatin-2 (418 aa).

Positions 10-206 (KYVKLVLVAD…DMPQCILEKP (197 aa)) constitute a Peptidase M12B domain. Intrachain disulfides connect C121–C201, C161–C185, and C163–C168. A Zn(2+)-binding site is contributed by H146. E147 is a catalytic residue. Residues H150 and H156 each coordinate Zn(2+). The region spanning 214–299 (PPVCGNYFVE…AECTDRFQRN (86 aa)) is the Disintegrin domain. Residues V216, N219, F221, E223, E226, and D229 each contribute to the Ca(2+) site. Cystine bridges form between C217–C246, C228–C241, C230–C236, C240–C263, C254–C260, C259–C285, C272–C292, C279–C310, C303–C315, C322–C372, C337–C383, C350–C360, C367–C409, and C403–C414. The D/ECD-tripeptide signature appears at 278 to 280 (ECD). D280, M281, D283, D294, and R295 together coordinate Ca(2+). An N-linked (GlcNAc...) asparagine glycan is attached at N312.

Belongs to the venom metalloproteinase (M12B) family. P-III subfamily. P-IIIc sub-subfamily. In terms of assembly, homodimer; disulfide-linked. Requires Zn(2+) as cofactor. Expressed by the venom gland.

It localises to the secreted. In terms of biological role, snake venom zinc metalloprotease that induces apoptosis in vascular endothelial cells (VEC), without degrading the extracellular matrix (it cannot cleave collagen) or inhibiting adhesion of VEC. Has also fibrinogenolytic and hemorrhagic activities. In Bothrops atrox (Barba amarilla), this protein is Zinc metalloproteinase-disintegrin-like batroxstatin-2.